Reading from the N-terminus, the 352-residue chain is Aspartic protease Bla g 2 (352 aa).

The first 19 residues, 1–19 (MIGLKLVTVLFAVATITHA), serve as a signal peptide directing secretion. Residues 20 to 24 (AELQR) constitute a propeptide, removed in mature form. A Peptidase A1 domain is found at 39 to 346 (YAGITKIGNQ…NWENKTMGFG (308 aa)). D55 is an active-site residue. 3 disulfide bridges follow: C59–C151, C68–C73, and C75–C136. N-linked (GlcNAc...) asparagine glycosylation is present at N117. Zn(2+) contacts are provided by H178 and H186. D239 is an active-site residue. Intrachain disulfides connect C261-C272 and C276-C309. N295 carries an N-linked (GlcNAc...) asparagine glycan. Residues D326 and D330 each contribute to the Zn(2+) site. An N-linked (GlcNAc...) asparagine glycan is attached at N340.

This sequence belongs to the peptidase A1 family. As to quaternary structure, homodimer.

Its function is as follows. Functions as a digestive enzyme in the cockroach. This is Aspartic protease Bla g 2 from Blattella germanica (German cockroach).